We begin with the raw amino-acid sequence, 1300 residues long: Serine protease EspP (1300 aa).

Residues Met1–Ala55 form the signal peptide. The region spanning Gln57–Asn311 is the Peptidase S6 domain. Residues His127, Asp156, and Ser263 each act as charge relay system in the active site. The 267-residue stretch at Asp1034–Phe1300 folds into the Autotransporter domain.

In terms of processing, cleaved to release the mature protein from the outer membrane.

The protein resides in the periplasm. It localises to the secreted. Its subcellular location is the cell surface. It is found in the cell outer membrane. In terms of biological role, serine protease with cytotoxic effect. Disrupts actin cytoskeleton resulting cell detachment in vitro. The protein is Serine protease EspP (espP) of Escherichia coli.